The chain runs to 562 residues: RNA N(6)-adenosine-methyltransferase METTL16 (562 aa).

Residues 17-20 form an RNA-binding region; it reads PPDF. Residues Arg-82, Gly-110, Ser-114, Glu-133, Thr-164, and Asn-184 each coordinate S-adenosyl-L-methionine. The K-loop stretch occupies residues 163–167; that stretch reads KTLLM. 3 RNA-binding regions span residues 199-211, 250-254, and 277-283; these read SRNP…SSVN, GKKCS, and QGRTMRW. The segment at 289–400 is VCR 1; it reads FYDDVTVPSP…QLREVPRAPE (112 aa). A Phosphoserine modification is found at Ser-329. Residues 402–413 show a composition bias toward basic and acidic residues; the sequence is VIQALEEKKPTP. A disordered region spans residues 402 to 498; the sequence is VIQALEEKKP…DQEASEQFGS (97 aa). A compositionally biased stretch (acidic residues) spans 458-467; that stretch reads ENPEPTEDER. Thr-463 is subject to Phosphothreonine. Residues 480–496 show a composition bias toward polar residues; the sequence is CQGSSNGAQDQEASEQF. A VCR 2 region spans residues 514 to 562; the sequence is YLFKCLINVKKEVDDALVEMHWVEGQNRDLMNQLCTYIRNQIFRLVAVN.

The protein belongs to the methyltransferase superfamily. METTL16/RlmF family. As to quaternary structure, interacts with MEPCE. Interacts with LARP7.

The protein resides in the nucleus. The protein localises to the cytoplasm. The enzyme catalyses adenosine in U6 snRNA + S-adenosyl-L-methionine = N(6)-methyladenosine in U6 snRNA + S-adenosyl-L-homocysteine + H(+). The catalysed reaction is an adenosine in mRNA + S-adenosyl-L-methionine = an N(6)-methyladenosine in mRNA + S-adenosyl-L-homocysteine + H(+). Methyltransferase activity is autoinhibited by the K-loop region that blocks S-adenosyl-L-methionine-binding. Upon activation, K-loop changes conformation, allowing S-adenosyl-L-methionine-binding and subsequent methyltransferase activity. mRNA N6-adenosine-methyltransferase activity is inhibited by zinc. Functionally, RNA N6-methyltransferase that methylates adenosine residues at the N(6) position of a subset of RNAs and is involved in S-adenosyl-L-methionine homeostasis by regulating expression of MAT2A transcripts. Able to N6-methylate a subset of mRNAs and U6 small nuclear RNAs (U6 snRNAs). In contrast to the METTL3-METTL14 heterodimer, only able to methylate a limited number of RNAs: requires both a 5'UACAGAGAA-3' nonamer sequence and a specific RNA structure. Plays a key role in S-adenosyl-L-methionine homeostasis by mediating N6-methylation of MAT2A mRNAs, altering splicing of MAT2A transcripts: in presence of S-adenosyl-L-methionine, binds the 3'-UTR region of MAT2A mRNA and specifically N6-methylates the first hairpin of MAT2A mRNA, preventing recognition of their 3'-splice site by U2AF1/U2AF35, thereby inhibiting splicing and protein production of S-adenosylmethionine synthase. In S-adenosyl-L-methionine-limiting conditions, binds the 3'-UTR region of MAT2A mRNA but stalls due to the lack of a methyl donor, preventing N6-methylation and promoting expression of MAT2A. In addition to mRNAs, also able to mediate N6-methylation of U6 small nuclear RNA (U6 snRNA): specifically N6-methylates adenine in position 43 of U6 snRNAs. Also able to bind various lncRNAs, such as 7SK snRNA (7SK RNA) or 7SL RNA. Specifically binds the 3'-end of the MALAT1 long non-coding RNA. The chain is RNA N(6)-adenosine-methyltransferase METTL16 from Homo sapiens (Human).